Reading from the N-terminus, the 242-residue chain is 1-(5-phosphoribosyl)-5-[(5-phosphoribosylamino)methylideneamino] imidazole-4-carboxamide isomerase (242 aa).

Asp-10 (proton acceptor) is an active-site residue.

This sequence belongs to the HisA/HisF family.

It localises to the cytoplasm. It catalyses the reaction 1-(5-phospho-beta-D-ribosyl)-5-[(5-phospho-beta-D-ribosylamino)methylideneamino]imidazole-4-carboxamide = 5-[(5-phospho-1-deoxy-D-ribulos-1-ylimino)methylamino]-1-(5-phospho-beta-D-ribosyl)imidazole-4-carboxamide. It participates in amino-acid biosynthesis; L-histidine biosynthesis; L-histidine from 5-phospho-alpha-D-ribose 1-diphosphate: step 4/9. The polypeptide is 1-(5-phosphoribosyl)-5-[(5-phosphoribosylamino)methylideneamino] imidazole-4-carboxamide isomerase (Corynebacterium diphtheriae (strain ATCC 700971 / NCTC 13129 / Biotype gravis)).